The sequence spans 807 residues: Glycerol-3-phosphate acyltransferase (807 aa).

The HXXXXD motif signature appears at 308–313; it reads CHRSHM.

The protein belongs to the GPAT/DAPAT family.

It is found in the cell inner membrane. The catalysed reaction is sn-glycerol 3-phosphate + an acyl-CoA = a 1-acyl-sn-glycero-3-phosphate + CoA. It participates in phospholipid metabolism; CDP-diacylglycerol biosynthesis; CDP-diacylglycerol from sn-glycerol 3-phosphate: step 1/3. This is Glycerol-3-phosphate acyltransferase from Shewanella sp. (strain ANA-3).